Consider the following 134-residue polypeptide: Acyl-CoA thioester hydrolase YbgC (134 aa).

Residue aspartate 18 is part of the active site.

The protein belongs to the 4-hydroxybenzoyl-CoA thioesterase family.

Its subcellular location is the cell inner membrane. Its function is as follows. Thioesterase that appears to be involved in phospholipid metabolism. Some specific acyl-ACPs could be physiological substrates. Displays acyl-CoA thioesterase activity on malonyl-CoA in vitro, catalyzing the hydrolysis of the thioester bond. The polypeptide is Acyl-CoA thioester hydrolase YbgC (ybgC) (Escherichia coli O157:H7).